Consider the following 395-residue polypeptide: Biotin biosynthesis cytochrome P450 (395 aa).

Arg-60 contacts substrate. His-89–Arg-93 is a binding site for heme. Ile-169–Arg-173 is a binding site for substrate. A disulfide bridge links Cys-250 with Cys-275. Thr-285 to Arg-287 contributes to the heme binding site. Tyr-307 contributes to the substrate binding site. Heme-binding positions include His-343–Cys-345 and Cys-345.

It depends on heme as a cofactor.

It carries out the reaction a C2-C8-saturated long-chain fatty acyl-[ACP] + 2 reduced [flavodoxin] + 3 O2 = 6-carboxyhexanoyl-[ACP] + a fatty aldehyde + 2 oxidized [flavodoxin] + 3 H2O + 3 H(+). It functions in the pathway cofactor biosynthesis; biotin biosynthesis. Catalyzes the C-C bond cleavage of fatty acid linked to acyl carrier protein (ACP) to generate pimelic acid for biotin biosynthesis. It has high affinity for long-chain fatty acids with the greatest affinity for myristic acid. In Bacillus subtilis (strain 168), this protein is Biotin biosynthesis cytochrome P450 (bioI).